Reading from the N-terminus, the 202-residue chain is FMN-dependent NADH:quinone oxidoreductase (202 aa).

FMN-binding positions include Ser-12 and 21–23; that span reads SFS.

Belongs to the azoreductase type 1 family. As to quaternary structure, homodimer. FMN is required as a cofactor.

It carries out the reaction 2 a quinone + NADH + H(+) = 2 a 1,4-benzosemiquinone + NAD(+). The catalysed reaction is N,N-dimethyl-1,4-phenylenediamine + anthranilate + 2 NAD(+) = 2-(4-dimethylaminophenyl)diazenylbenzoate + 2 NADH + 2 H(+). Its function is as follows. Quinone reductase that provides resistance to thiol-specific stress caused by electrophilic quinones. In terms of biological role, also exhibits azoreductase activity. Catalyzes the reductive cleavage of the azo bond in aromatic azo compounds to the corresponding amines. The sequence is that of FMN-dependent NADH:quinone oxidoreductase from Mycoplasma mobile (strain ATCC 43663 / 163K / NCTC 11711) (Mesomycoplasma mobile).